Reading from the N-terminus, the 360-residue chain is Histidinol-phosphate aminotransferase (360 aa).

Lysine 224 carries the post-translational modification N6-(pyridoxal phosphate)lysine.

This sequence belongs to the class-II pyridoxal-phosphate-dependent aminotransferase family. Histidinol-phosphate aminotransferase subfamily. Pyridoxal 5'-phosphate serves as cofactor.

It carries out the reaction L-histidinol phosphate + 2-oxoglutarate = 3-(imidazol-4-yl)-2-oxopropyl phosphate + L-glutamate. It functions in the pathway amino-acid biosynthesis; L-histidine biosynthesis; L-histidine from 5-phospho-alpha-D-ribose 1-diphosphate: step 7/9. The polypeptide is Histidinol-phosphate aminotransferase (Methanococcoides burtonii (strain DSM 6242 / NBRC 107633 / OCM 468 / ACE-M)).